We begin with the raw amino-acid sequence, 124 residues long: Small ribosomal subunit protein uS13 (124 aa).

The tract at residues 95 to 124 is disordered; that stretch reads GLPVRGQRTKTNARTRKGPKRTIAGKKKAR.

The protein belongs to the universal ribosomal protein uS13 family. As to quaternary structure, part of the 30S ribosomal subunit. Forms a loose heterodimer with protein S19. Forms two bridges to the 50S subunit in the 70S ribosome.

Its function is as follows. Located at the top of the head of the 30S subunit, it contacts several helices of the 16S rRNA. In the 70S ribosome it contacts the 23S rRNA (bridge B1a) and protein L5 of the 50S subunit (bridge B1b), connecting the 2 subunits; these bridges are implicated in subunit movement. Contacts the tRNAs in the A and P-sites. The polypeptide is Small ribosomal subunit protein uS13 (Mycolicibacterium smegmatis (strain ATCC 700084 / mc(2)155) (Mycobacterium smegmatis)).